Here is a 220-residue protein sequence, read N- to C-terminus: Deoxyribose-phosphate aldolase (220 aa).

Catalysis depends on Asp89, which acts as the Proton donor/acceptor. Lys151 serves as the catalytic Schiff-base intermediate with acetaldehyde. Residue Lys180 is the Proton donor/acceptor of the active site.

The protein belongs to the DeoC/FbaB aldolase family. DeoC type 1 subfamily.

It localises to the cytoplasm. The catalysed reaction is 2-deoxy-D-ribose 5-phosphate = D-glyceraldehyde 3-phosphate + acetaldehyde. Its pathway is carbohydrate degradation; 2-deoxy-D-ribose 1-phosphate degradation; D-glyceraldehyde 3-phosphate and acetaldehyde from 2-deoxy-alpha-D-ribose 1-phosphate: step 2/2. Functionally, catalyzes a reversible aldol reaction between acetaldehyde and D-glyceraldehyde 3-phosphate to generate 2-deoxy-D-ribose 5-phosphate. The protein is Deoxyribose-phosphate aldolase of Staphylococcus saprophyticus subsp. saprophyticus (strain ATCC 15305 / DSM 20229 / NCIMB 8711 / NCTC 7292 / S-41).